Consider the following 115-residue polypeptide: Peptidyl-tRNA hydrolase (115 aa).

This sequence belongs to the PTH2 family.

Its subcellular location is the cytoplasm. The catalysed reaction is an N-acyl-L-alpha-aminoacyl-tRNA + H2O = an N-acyl-L-amino acid + a tRNA + H(+). The natural substrate for this enzyme may be peptidyl-tRNAs which drop off the ribosome during protein synthesis. The sequence is that of Peptidyl-tRNA hydrolase (pth) from Nanoarchaeum equitans (strain Kin4-M).